The chain runs to 124 residues: Fluoride-specific ion channel FluC 1 (124 aa).

A run of 4 helical transmembrane segments spans residues 7–27, 32–52, 58–78, and 93–113; these read IQSK…LGAI, LNNY…IVGL, IQFF…GWIL, and AGLI…TFWI. Na(+) contacts are provided by Gly-68 and Thr-71.

This sequence belongs to the fluoride channel Fluc/FEX (TC 1.A.43) family.

It localises to the cell inner membrane. The catalysed reaction is fluoride(in) = fluoride(out). With respect to regulation, na(+) is not transported, but it plays an essential structural role and its presence is essential for fluoride channel function. Fluoride-specific ion channel. Important for reducing fluoride concentration in the cell, thus reducing its toxicity. The sequence is that of Fluoride-specific ion channel FluC 1 from Prochlorococcus marinus (strain SARG / CCMP1375 / SS120).